A 369-amino-acid chain; its full sequence is Aminomethyltransferase (369 aa).

The protein belongs to the GcvT family. In terms of assembly, the glycine cleavage system is composed of four proteins: P, T, L and H.

The catalysed reaction is N(6)-[(R)-S(8)-aminomethyldihydrolipoyl]-L-lysyl-[protein] + (6S)-5,6,7,8-tetrahydrofolate = N(6)-[(R)-dihydrolipoyl]-L-lysyl-[protein] + (6R)-5,10-methylene-5,6,7,8-tetrahydrofolate + NH4(+). The glycine cleavage system catalyzes the degradation of glycine. This is Aminomethyltransferase from Rippkaea orientalis (strain PCC 8801 / RF-1) (Cyanothece sp. (strain PCC 8801)).